Consider the following 1035-residue polypeptide: MSYFRNRDIDIERNSMNRSVQERKCRYSIRKLSVGAVSMIVGAVVFGTSPVLAQEGASEQPLANETQLSGESSTLTDTEKSQPSSETELSGNKQEQERKDKQEEKIPRDYYARDLENVETVIEKEDVETNASNGQRVDLSSELDKLKKLENATVHMEFKPDAKAPAFYNLFSVSSATKKDEYFTMAVYNNTATLEGRGSDGKQFYNNYNDAPLKVKPGQWNSVTFTVEKPTAELPKGRVRLYVNGVLSRTSLRSGNFIKDMPDVTHVQIGATKRANNTVWGSNLQIRNLTVYNRALTPEEVQKRSQLFKRSDLEKKLPEGAALTEKTDIFESGRNGKPNKDGIKSYRIPALLKTDKGTLIAGADERRLHSSDWGDIGMVIRRSEDNGKTWGDRVTITNLRDNPKASDPSIGSPVNIDMVLVQDPETKRIFSIYDMFPEGKGIFGMSSQKEEAYKKIDGKTYQILYREGEKGAYTIRENGTVYTPDGKATDYRVVVDPVKPAYSDKGDLYKGNQLLGNIYFTTNKTSPFRIAKDSYLWMSYSDDDGKTWSAPQDITPMVKADWMKFLGVGPGTGIVLRNGPHKGRILIPVYTTNNVSHLNGSQSSRIIYSDDHGKTWHAGEAVNDNRQVDGQKIHSSTMNNRRAQNTESTVVQLNNGDVKLFMRGLTGDLQVATSKDGGVTWEKDIKRYPQVKDVYVQMSAIHTMHEGKEYIILSNAGGPKRENGMVHLARVEENGELTWLKHNPIQKGEFAYNSLQELGNGEYGILYEHTEKGQNAYTLSFRKFNWDFLSKDLISPTEAKVKRTREMGKGVIGLEFDSEVLVNKAPTLQLANGKTARFMTQYDTKTLLFTVDSEDMGQKVTGLAEGAIESMHNLPVSVAGTKLSNGMNGSEAAVHEVPEYTGPLGTSGEEPAPTVEKPEYTGPLGTSGEEPAPTVEKPEYTGPLGTAGEEAAPTVEKPEFTGGVNGTEPAVHEIAEYKGSDSLVTLTTKEDYTYKAPLAQQALPETGNKESDLLASLGLTAFFLGLFTLGKKREQ.

The first 53 residues, 1–53 (MSYFRNRDIDIERNSMNRSVQERKCRYSIRKLSVGAVSMIVGAVVFGTSPVLA), serve as a signal peptide directing secretion. The interval 57–112 (ASEQPLANETQLSGESSTLTDTEKSQPSSETELSGNKQEQERKDKQEEKIPRDYYA) is disordered. Residues 61–92 (PLANETQLSGESSTLTDTEKSQPSSETELSGN) are compositionally biased toward polar residues. A compositionally biased stretch (basic and acidic residues) spans 94 to 112 (QEQERKDKQEEKIPRDYYA). Position 347 (Arg-347) interacts with substrate. The Proton acceptor role is filled by Asp-372. 3 BNR repeats span residues 381–392 (RRSEDNGKTWGD), 539–550 (SYSDDDGKTWSA), and 607–618 (IYSDDHGKTWHA). Residue Glu-647 is part of the active site. Arg-663 lines the substrate pocket. Residues 672-683 (ATSKDGGVTWEK) form a BNR 4 repeat. The tract at residues 902-951 (GPLGTSGEEPAPTVEKPEYTGPLGTSGEEPAPTVEKPEYTGPLGTAGEEA) is disordered. The LPXTG sorting signal motif lies at 1003-1007 (LPETG). Thr-1006 carries the pentaglycyl murein peptidoglycan amidated threonine modification. The propeptide at 1007–1035 (GNKESDLLASLGLTAFFLGLFTLGKKREQ) is removed by sortase.

It belongs to the glycosyl hydrolase 33 family.

Its subcellular location is the secreted. The protein localises to the cell wall. The catalysed reaction is Hydrolysis of alpha-(2-&gt;3)-, alpha-(2-&gt;6)-, alpha-(2-&gt;8)- glycosidic linkages of terminal sialic acid residues in oligosaccharides, glycoproteins, glycolipids, colominic acid and synthetic substrates.. In Streptococcus pneumoniae, this protein is Sialidase A (nanA).